Consider the following 105-residue polypeptide: Early nodulin-93 (105 aa).

The chain crosses the membrane as a helical span at residues 66 to 83 (TAQALIISTATAAAYFIV).

It is found in the membrane. The sequence is that of Early nodulin-93 from Glycine max (Soybean).